The primary structure comprises 76 residues: Small ribosomal subunit protein bS18 (76 aa).

This sequence belongs to the bacterial ribosomal protein bS18 family. In terms of assembly, part of the 30S ribosomal subunit. Forms a tight heterodimer with protein bS6.

Its function is as follows. Binds as a heterodimer with protein bS6 to the central domain of the 16S rRNA, where it helps stabilize the platform of the 30S subunit. In Stutzerimonas stutzeri (strain A1501) (Pseudomonas stutzeri), this protein is Small ribosomal subunit protein bS18.